The primary structure comprises 368 residues: MASAVISVPTTASRFALLQVDSDSDSDSDVGKPKAAGRGAGKPRSGKSPSGKNSQNNEKKKEKRRRKKEQQQSEANELRSLAFKKIPQKSTAPPSLTLQDLANDLINPANVQQGSKPQENWQEWKQRDEQLTSDLYEADLEKALMLSKLEFEEHKKDADKAETASPKTKTGGKKDRKKNQQGKDKRVTVSLKDFQQEDQLKNKPEREPVNPALRDDKFFNKLEDDVSKIVQRDKRREQYSNSAGQEVNTSSEHEQDVRTEQLKYELEKKDQEIAKLKKTISQWEERYKEVKARNSQLLKMLQQGEMKDKAEILLQVEELLNIKEELSSQVTQLHTALEQERSKVKGLQSEQPKHQGNRKGKKASEGDV.

Disordered regions lie at residues 18–127 (LQVD…WKQR), 152–260 (EEHK…VRTE), and 333–368 (LHTA…EGDV). Over residues 33 to 56 (PKAAGRGAGKPRSGKSPSGKNSQN) the composition is skewed to low complexity. Residues 52-82 (KNSQNNEKKKEKRRRKKEQQQSEANELRSLA) adopt a coiled-coil conformation. Polar residues-rich tracts occupy residues 88–100 (QKST…TLQD) and 109–121 (ANVQ…QENW). The segment covering 152-162 (EEHKKDADKAE) has biased composition (basic and acidic residues). Positions 170–180 (TGGKKDRKKNQ) are enriched in basic residues. Basic and acidic residues predominate over residues 194-238 (FQQEDQLKNKPEREPVNPALRDDKFFNKLEDDVSKIVQRDKRREQ). A compositionally biased stretch (polar residues) spans 239 to 250 (YSNSAGQEVNTS). The span at 251 to 260 (SEHEQDVRTE) shows a compositional bias: basic and acidic residues. Residues 256-350 (DVRTEQLKYE…RSKVKGLQSE (95 aa)) are a coiled coil.

It belongs to the GKAP1 family.

The protein localises to the golgi apparatus. In terms of biological role, may play a role in the regulation of insulin-dependent IRS1 tyrosine phosphorylation in adipocytes. The protein is G kinase-anchoring protein 1 (gkap1) of Danio rerio (Zebrafish).